The following is a 78-amino-acid chain: UPF0270 protein YE3952 (78 aa).

Belongs to the UPF0270 family.

This chain is UPF0270 protein YE3952, found in Yersinia enterocolitica serotype O:8 / biotype 1B (strain NCTC 13174 / 8081).